A 289-amino-acid polypeptide reads, in one-letter code: Oxaloacetate decarboxylase (289 aa).

Residue Ser-47 participates in substrate binding. A Mg(2+)-binding site is contributed by Asp-85. Residues Arg-156 and His-232 each contribute to the substrate site.

Belongs to the isocitrate lyase/PEP mutase superfamily. Oxaloacetate decarboxylase family. In terms of assembly, homotetramer; dimer of dimers. Mg(2+) serves as cofactor.

It catalyses the reaction oxaloacetate + H(+) = pyruvate + CO2. Functionally, catalyzes the decarboxylation of oxaloacetate into pyruvate. Seems to play a role in maintaining cellular concentrations of bicarbonate and pyruvate. This chain is Oxaloacetate decarboxylase, found in Rhodopseudomonas palustris (strain BisA53).